The chain runs to 62 residues: Alpha-conotoxin-like S1.1 (62 aa).

A signal peptide spans Met1–Ser21. The propeptide occupies Phe22–Asn48. Cystine bridges form between Cys50–Cys56 and Cys51–Cys61. Cys61 is modified (cysteine amide).

The protein belongs to the conotoxin A superfamily. Expressed by the venom duct.

Its subcellular location is the secreted. Alpha-conotoxins act on postsynaptic membranes, they bind to the nicotinic acetylcholine receptors (nAChR) and thus inhibit them. The sequence is that of Alpha-conotoxin-like S1.1 from Conus striatus (Striated cone).